A 155-amino-acid polypeptide reads, in one-letter code: Interleukin-2 (155 aa).

The N-terminal stretch at 1 to 20 (MYKIQLLSCIALTLALVANG) is a signal peptide. O-linked (GalNAc...) threonine glycosylation is present at Thr23. Cysteines 79 and 127 form a disulfide.

Belongs to the IL-2 family.

It is found in the secreted. Functionally, cytokine produced by activated CD4-positive helper T-cells and to a lesser extend activated CD8-positive T-cells and natural killer (NK) cells that plays pivotal roles in the immune response and tolerance. Binds to a receptor complex composed of either the high-affinity trimeric IL-2R (IL2RA/CD25, IL2RB/CD122 and IL2RG/CD132) or the low-affinity dimeric IL-2R (IL2RB and IL2RG). Interaction with the receptor leads to oligomerization and conformation changes in the IL-2R subunits resulting in downstream signaling starting with phosphorylation of JAK1 and JAK3. In turn, JAK1 and JAK3 phosphorylate the receptor to form a docking site leading to the phosphorylation of several substrates including STAT5. This process leads to activation of several pathways including STAT, phosphoinositide-3-kinase/PI3K and mitogen-activated protein kinase/MAPK pathways. Functions as a T-cell growth factor and can increase NK-cell cytolytic activity as well. Promotes strong proliferation of activated B-cells and subsequently immunoglobulin production. Plays a pivotal role in regulating the adaptive immune system by controlling the survival and proliferation of regulatory T-cells, which are required for the maintenance of immune tolerance. Moreover, participates in the differentiation and homeostasis of effector T-cell subsets, including Th1, Th2, Th17 as well as memory CD8-positive T-cells. This chain is Interleukin-2 (IL2), found in Ovis aries (Sheep).